The sequence spans 410 residues: Cytochrome P450(MEG) (410 aa).

Residue cysteine 355 participates in heme binding.

This sequence belongs to the cytochrome P450 family. The cofactor is heme.

It is found in the cytoplasm. The catalysed reaction is reduced 2[4Fe-4S]-[ferredoxin] + progesterone + O2 + 2 H(+) = 15beta-hydroxyprogesterone + oxidized 2[4Fe-4S]-[ferredoxin] + H2O. Its function is as follows. Has the capacity to hydroxylate certain steroids in the 15-beta position. Also hydroxylates progesterone in the 11-alpha and 9-beta position. The chain is Cytochrome P450(MEG) (cyp106A2) from Priestia megaterium (Bacillus megaterium).